Consider the following 102-residue polypeptide: Urease subunit beta (102 aa).

It belongs to the urease beta subunit family. As to quaternary structure, heterotrimer of UreA (gamma), UreB (beta) and UreC (alpha) subunits. Three heterotrimers associate to form the active enzyme.

It is found in the cytoplasm. The catalysed reaction is urea + 2 H2O + H(+) = hydrogencarbonate + 2 NH4(+). It functions in the pathway nitrogen metabolism; urea degradation; CO(2) and NH(3) from urea (urease route): step 1/1. This chain is Urease subunit beta, found in Methylobacillus flagellatus (strain ATCC 51484 / DSM 6875 / VKM B-1610 / KT).